Reading from the N-terminus, the 400-residue chain is Argininosuccinate synthase (400 aa).

Ala-9–Ser-17 contributes to the ATP binding site. Tyr-87 contributes to the L-citrulline binding site. Gly-117 is an ATP binding site. L-aspartate contacts are provided by Thr-119, Asn-123, and Asp-124. Position 123 (Asn-123) interacts with L-citrulline. 5 residues coordinate L-citrulline: Arg-127, Ser-176, Ser-185, Glu-261, and Tyr-273.

This sequence belongs to the argininosuccinate synthase family. Type 1 subfamily. Homotetramer.

It is found in the cytoplasm. It carries out the reaction L-citrulline + L-aspartate + ATP = 2-(N(omega)-L-arginino)succinate + AMP + diphosphate + H(+). It participates in amino-acid biosynthesis; L-arginine biosynthesis; L-arginine from L-ornithine and carbamoyl phosphate: step 2/3. This is Argininosuccinate synthase from Pelodictyon phaeoclathratiforme (strain DSM 5477 / BU-1).